Here is a 695-residue protein sequence, read N- to C-terminus: Protein ACTIVITY OF BC1 COMPLEX KINASE 7, chloroplastic (695 aa).

In terms of domain architecture, Protein kinase spans 259-589 (EFEEQPIAAA…VQEIRKQADD (331 aa)). ATP is bound by residues 265–273 (IAAASLGQV) and lysine 287. Aspartate 421 functions as the Proton acceptor in the catalytic mechanism. 2 helical membrane-spanning segments follow: residues 633–653 (TILQMATMYTVLGGTLLNIGV) and 659–679 (GSQLVANGSFIGAGIFMLLVL).

This sequence belongs to the protein kinase superfamily. ADCK protein kinase family. In terms of tissue distribution, mostly expressed in leaves and flowers, and, to a lower extent, in roots.

Its subcellular location is the plastid. The protein resides in the chloroplast thylakoid membrane. It is found in the chloroplast. It localises to the plastoglobule. It catalyses the reaction L-seryl-[protein] + ATP = O-phospho-L-seryl-[protein] + ADP + H(+). The enzyme catalyses L-threonyl-[protein] + ATP = O-phospho-L-threonyl-[protein] + ADP + H(+). Its function is as follows. Involved in resistance to oxidative stress. Influences responses to reactive oxygen species (ROS) production. Regulates plastoglobules formation in thylakoids. Together with OSA1, regulates iron distribution within the chloroplast and mediates the oxidative stress response. Together with ABC1K8, influences chloroplast lipid synthesis/accumulation and modulates chloroplast membrane composition in response to stress. The chain is Protein ACTIVITY OF BC1 COMPLEX KINASE 7, chloroplastic from Arabidopsis thaliana (Mouse-ear cress).